Consider the following 294-residue polypeptide: Large ribosomal subunit protein uL18B (294 aa).

It belongs to the universal ribosomal protein uL18 family. Component of the large ribosomal subunit (LSU). Mature yeast ribosomes consist of a small (40S) and a large (60S) subunit. The 40S small subunit contains 1 molecule of ribosomal RNA (18S rRNA) and 33 different proteins (encoded by 57 genes). The large 60S subunit contains 3 rRNA molecules (25S, 5.8S and 5S rRNA) and 46 different proteins (encoded by 81 genes). Component of a hexameric 5S RNP precursor complex, composed of 5S RNA, rrs1, rpf2, rpl5a/rpl5b, rpl11a/rpl11b and syo1; this complex acts as a precursor for ribosome assembly. rpl5a/rpl5b/uL18 forms a heterotrimeric complex with syo1 and rpl11a/rpl11b/uL5. Interaction of this complex with KAP104 allows the nuclear import of the heterotrimer.

It localises to the cytoplasm. The protein resides in the nucleus. Functionally, component of the ribosome, a large ribonucleoprotein complex responsible for the synthesis of proteins in the cell. The small ribosomal subunit (SSU) binds messenger RNAs (mRNAs) and translates the encoded message by selecting cognate aminoacyl-transfer RNA (tRNA) molecules. The large subunit (LSU) contains the ribosomal catalytic site termed the peptidyl transferase center (PTC), which catalyzes the formation of peptide bonds, thereby polymerizing the amino acids delivered by tRNAs into a polypeptide chain. The nascent polypeptides leave the ribosome through a tunnel in the LSU and interact with protein factors that function in enzymatic processing, targeting, and the membrane insertion of nascent chains at the exit of the ribosomal tunnel. This chain is Large ribosomal subunit protein uL18B (rpl502), found in Schizosaccharomyces pombe (strain 972 / ATCC 24843) (Fission yeast).